The following is a 110-amino-acid chain: MHVKTGDEVLVIAGKDKGRRGKIKRALPAVNRVVVEGINIVKRHQKPRGPGRPGGIIEMEAPLHASNVMLICPSCGRASRTGKRFLEETDHKGRPRKVRYCKACDAVIDK.

Belongs to the universal ribosomal protein uL24 family. As to quaternary structure, part of the 50S ribosomal subunit.

Its function is as follows. One of two assembly initiator proteins, it binds directly to the 5'-end of the 23S rRNA, where it nucleates assembly of the 50S subunit. One of the proteins that surrounds the polypeptide exit tunnel on the outside of the subunit. The chain is Large ribosomal subunit protein uL24 from Chloroflexus aurantiacus (strain ATCC 29366 / DSM 635 / J-10-fl).